The sequence spans 365 residues: 3-isopropylmalate dehydrogenase (365 aa).

80-93 is a binding site for NAD(+); that stretch reads GPKWADNTGDQRPE. Substrate contacts are provided by R100, R110, R138, and D223. Residues D223, D247, and D251 each coordinate Mg(2+). 280-292 contributes to the NAD(+) binding site; the sequence is GSAPDIAGQDVAN. The interval 337–365 is disordered; it reads NEEDASTSAFGREVATRAADSVPQNAPTP.

Belongs to the isocitrate and isopropylmalate dehydrogenases family. LeuB type 1 subfamily. As to quaternary structure, homodimer. It depends on Mg(2+) as a cofactor. The cofactor is Mn(2+).

Its subcellular location is the cytoplasm. The catalysed reaction is (2R,3S)-3-isopropylmalate + NAD(+) = 4-methyl-2-oxopentanoate + CO2 + NADH. It functions in the pathway amino-acid biosynthesis; L-leucine biosynthesis; L-leucine from 3-methyl-2-oxobutanoate: step 3/4. Its function is as follows. Catalyzes the oxidation of 3-carboxy-2-hydroxy-4-methylpentanoate (3-isopropylmalate) to 3-carboxy-4-methyl-2-oxopentanoate. The product decarboxylates to 4-methyl-2 oxopentanoate. This is 3-isopropylmalate dehydrogenase from Salinibacter ruber (strain DSM 13855 / M31).